Consider the following 288-residue polypeptide: Bifunctional protein FolD (288 aa).

Residues 166 to 168 (GAS) and Ile-232 contribute to the NADP(+) site.

This sequence belongs to the tetrahydrofolate dehydrogenase/cyclohydrolase family. As to quaternary structure, homodimer.

It carries out the reaction (6R)-5,10-methylene-5,6,7,8-tetrahydrofolate + NADP(+) = (6R)-5,10-methenyltetrahydrofolate + NADPH. It catalyses the reaction (6R)-5,10-methenyltetrahydrofolate + H2O = (6R)-10-formyltetrahydrofolate + H(+). It participates in one-carbon metabolism; tetrahydrofolate interconversion. Its function is as follows. Catalyzes the oxidation of 5,10-methylenetetrahydrofolate to 5,10-methenyltetrahydrofolate and then the hydrolysis of 5,10-methenyltetrahydrofolate to 10-formyltetrahydrofolate. This Escherichia coli O8 (strain IAI1) protein is Bifunctional protein FolD.